Here is a 165-residue protein sequence, read N- to C-terminus: Lipoprotein signal peptidase (165 aa).

5 consecutive transmembrane segments (helical) span residues 10 to 30 (LKWLWLSILIMLLDIGTKYWV), 42 to 62 (VLPGINCYYVCNPGLAFGLFT), 71 to 91 (LFVWIITLVIVAFIIALYKLI), 105 to 125 (IGGALGNLLDRILYGAVVDFI), and 133 to 153 (HWPTFNVADIAICIGITIVTI). Active-site residues include Asp123 and Asp141.

The protein belongs to the peptidase A8 family.

It localises to the cell inner membrane. It carries out the reaction Release of signal peptides from bacterial membrane prolipoproteins. Hydrolyzes -Xaa-Yaa-Zaa-|-(S,diacylglyceryl)Cys-, in which Xaa is hydrophobic (preferably Leu), and Yaa (Ala or Ser) and Zaa (Gly or Ala) have small, neutral side chains.. The protein operates within protein modification; lipoprotein biosynthesis (signal peptide cleavage). This protein specifically catalyzes the removal of signal peptides from prolipoproteins. The chain is Lipoprotein signal peptidase from Blochmanniella pennsylvanica (strain BPEN).